Consider the following 309-residue polypeptide: Aspartate carbamoyltransferase catalytic subunit (309 aa).

Carbamoyl phosphate-binding residues include arginine 55 and threonine 56. Lysine 85 serves as a coordination point for L-aspartate. Carbamoyl phosphate contacts are provided by arginine 106, histidine 135, and glutamine 138. 2 residues coordinate L-aspartate: arginine 168 and arginine 230. Residues leucine 268 and proline 269 each contribute to the carbamoyl phosphate site.

This sequence belongs to the aspartate/ornithine carbamoyltransferase superfamily. ATCase family. In terms of assembly, heterododecamer (2C3:3R2) of six catalytic PyrB chains organized as two trimers (C3), and six regulatory PyrI chains organized as three dimers (R2).

The catalysed reaction is carbamoyl phosphate + L-aspartate = N-carbamoyl-L-aspartate + phosphate + H(+). It participates in pyrimidine metabolism; UMP biosynthesis via de novo pathway; (S)-dihydroorotate from bicarbonate: step 2/3. In terms of biological role, catalyzes the condensation of carbamoyl phosphate and aspartate to form carbamoyl aspartate and inorganic phosphate, the committed step in the de novo pyrimidine nucleotide biosynthesis pathway. The chain is Aspartate carbamoyltransferase catalytic subunit from Vibrio vulnificus (strain YJ016).